A 188-amino-acid polypeptide reads, in one-letter code: Ribosome-recycling factor (188 aa).

It belongs to the RRF family.

Its subcellular location is the cytoplasm. Responsible for the release of ribosomes from messenger RNA at the termination of protein biosynthesis. May increase the efficiency of translation by recycling ribosomes from one round of translation to another. This Blochmanniella pennsylvanica (strain BPEN) protein is Ribosome-recycling factor.